The following is a 513-amino-acid chain: Cytochrome P450 1A2 (513 aa).

Serine 68 carries an O-linked (GlcNAc) serine glycan. Substrate is bound at residue phenylalanine 225. Cysteine 456 serves as a coordination point for heme.

It belongs to the cytochrome P450 family. In terms of assembly, interacts with PGRMC1; the interaction requires PGRMC1 homodimerization. Heme serves as cofactor.

The protein resides in the endoplasmic reticulum membrane. The protein localises to the microsome membrane. It carries out the reaction an organic molecule + reduced [NADPH--hemoprotein reductase] + O2 = an alcohol + oxidized [NADPH--hemoprotein reductase] + H2O + H(+). The catalysed reaction is 17beta-estradiol + reduced [NADPH--hemoprotein reductase] + O2 = 2-hydroxy-17beta-estradiol + oxidized [NADPH--hemoprotein reductase] + H2O + H(+). The enzyme catalyses 17beta-estradiol + reduced [NADPH--hemoprotein reductase] + O2 = 4-hydroxy-17beta-estradiol + oxidized [NADPH--hemoprotein reductase] + H2O + H(+). It catalyses the reaction estrone + reduced [NADPH--hemoprotein reductase] + O2 = 2-hydroxyestrone + oxidized [NADPH--hemoprotein reductase] + H2O + H(+). It carries out the reaction estrone + reduced [NADPH--hemoprotein reductase] + O2 = 4-hydroxyestrone + oxidized [NADPH--hemoprotein reductase] + H2O + H(+). The catalysed reaction is cholesterol + reduced [NADPH--hemoprotein reductase] + O2 = 25-hydroxycholesterol + oxidized [NADPH--hemoprotein reductase] + H2O + H(+). The enzyme catalyses all-trans-retinol + reduced [NADPH--hemoprotein reductase] + O2 = all-trans-retinal + oxidized [NADPH--hemoprotein reductase] + 2 H2O + H(+). It catalyses the reaction all-trans-retinal + reduced [NADPH--hemoprotein reductase] + O2 = all-trans-retinoate + oxidized [NADPH--hemoprotein reductase] + H2O + 2 H(+). It carries out the reaction (5Z,8Z,11Z,14Z)-eicosatetraenoate + reduced [NADPH--hemoprotein reductase] + O2 = (14R,15S)-epoxy-(5Z,8Z,11Z)-eicosatrienoate + oxidized [NADPH--hemoprotein reductase] + H2O + H(+). The catalysed reaction is (5Z,8Z,11Z,14Z)-eicosatetraenoate + reduced [NADPH--hemoprotein reductase] + O2 = (14S,15R)-epoxy-(5Z,8Z,11Z)-eicosatrienoate + oxidized [NADPH--hemoprotein reductase] + H2O + H(+). The enzyme catalyses (5Z,8Z,11Z,14Z,17Z)-eicosapentaenoate + reduced [NADPH--hemoprotein reductase] + O2 = (17R,18S)-epoxy-(5Z,8Z,11Z,14Z)-eicosatetraenoate + oxidized [NADPH--hemoprotein reductase] + H2O + H(+). It catalyses the reaction (4Z,7Z,10Z,13Z,16Z,19Z)-docosahexaenoate + reduced [NADPH--hemoprotein reductase] + O2 = (19R,20S)-epoxy-(4Z,7Z,10Z,13Z,16Z)-docosapentaenoate + oxidized [NADPH--hemoprotein reductase] + H2O + H(+). It carries out the reaction (5S)-hydroperoxy-(6E,8Z,11Z,14Z)-eicosatetraenoate = 5-oxo-(6E,8Z,11Z,14Z)-eicosatetraenoate + H2O. The catalysed reaction is (12S)-hydroperoxy-(5Z,8Z,10E,14Z)-eicosatetraenoate = 12-oxo-(5Z,8Z,10E,14Z)-eicosatetraenoate + H2O. The enzyme catalyses (15S)-hydroperoxy-(5Z,8Z,11Z,13E)-eicosatetraenoate = 15-oxo-(5Z,8Z,11Z,13E)-eicosatetraenoate + H2O. It catalyses the reaction (13S)-hydroperoxy-(9Z,11E)-octadecadienoate = 13-oxo-(9Z,11E)-octadecadienoate + H2O. It carries out the reaction (5Z,8Z,11Z,14Z)-eicosatetraenoate + reduced [NADPH--hemoprotein reductase] + O2 = 13-hydroxy-(5Z,8Z,11Z,14Z)-eicosatetraenoate + oxidized [NADPH--hemoprotein reductase] + H2O + H(+). The catalysed reaction is (5Z,8Z,11Z,14Z)-eicosatetraenoate + reduced [NADPH--hemoprotein reductase] + O2 = 19-hydroxy-(5Z,8Z,11Z,14Z)-eicosatetraenoate + oxidized [NADPH--hemoprotein reductase] + H2O + H(+). The enzyme catalyses (9Z,12Z)-octadecadienoate + reduced [NADPH--hemoprotein reductase] + O2 = 11-hydroxy-(9Z,12Z)-octadecadienoate + oxidized [NADPH--hemoprotein reductase] + H2O + H(+). It participates in cofactor metabolism; retinol metabolism. It functions in the pathway steroid metabolism; cholesterol metabolism. Its pathway is lipid metabolism; arachidonate metabolism. In terms of biological role, a cytochrome P450 monooxygenase involved in the metabolism of various endogenous substrates, including fatty acids, steroid hormones and vitamins. Mechanistically, uses molecular oxygen inserting one oxygen atom into a substrate, and reducing the second into a water molecule, with two electrons provided by NADPH via cytochrome P450 reductase (NADPH--hemoprotein reductase). Catalyzes the hydroxylation of carbon-hydrogen bonds. Exhibits high catalytic activity for the formation of hydroxyestrogens from estrone (E1) and 17beta-estradiol (E2), namely 2-hydroxy E1 and E2. Metabolizes cholesterol toward 25-hydroxycholesterol, a physiological regulator of cellular cholesterol homeostasis. May act as a major enzyme for all-trans retinoic acid biosynthesis in the liver. Catalyzes two successive oxidative transformation of all-trans retinol to all-trans retinal and then to the active form all-trans retinoic acid. Primarily catalyzes stereoselective epoxidation of the last double bond of polyunsaturated fatty acids (PUFA), displaying a strong preference for the (R,S) stereoisomer. Catalyzes bisallylic hydroxylation and omega-1 hydroxylation of PUFA. May also participate in eicosanoids metabolism by converting hydroperoxide species into oxo metabolites (lipoxygenase-like reaction, NADPH-independent). Plays a role in the oxidative metabolism of xenobiotics. Catalyzes the N-hydroxylation of heterocyclic amines and the O-deethylation of phenacetin. Metabolizes caffeine via N3-demethylation. The protein is Cytochrome P450 1A2 (Cyp1a2) of Mus musculus (Mouse).